Here is a 151-residue protein sequence, read N- to C-terminus: Ubiquitin-like protein 4A-B (151 aa).

Residues 1–76 form the Ubiquitin-like domain; it reads MILTIKPLQG…LNLVVRPAGE (76 aa).

Component of the BAT3 complex.

The protein resides in the cytoplasm. It localises to the cytosol. Component of the BAT3 complex, a multiprotein complex involved in the post-translational delivery of tail-anchored (TA) membrane proteins to the endoplasmic reticulum membrane. TA membrane proteins, also named type II transmembrane proteins, contain a single C-terminal transmembrane region. In Salmo salar (Atlantic salmon), this protein is Ubiquitin-like protein 4A-B (ubl4ab).